The chain runs to 71 residues: Large ribosomal subunit protein uL29 (71 aa).

Belongs to the universal ribosomal protein uL29 family.

This is Large ribosomal subunit protein uL29 from Methanococcus maripaludis (strain C7 / ATCC BAA-1331).